Consider the following 239-residue polypeptide: tRNA1(Val) (adenine(37)-N6)-methyltransferase (239 aa).

It belongs to the methyltransferase superfamily. tRNA (adenine-N(6)-)-methyltransferase family.

It localises to the cytoplasm. The catalysed reaction is adenosine(37) in tRNA1(Val) + S-adenosyl-L-methionine = N(6)-methyladenosine(37) in tRNA1(Val) + S-adenosyl-L-homocysteine + H(+). Functionally, specifically methylates the adenine in position 37 of tRNA(1)(Val) (anticodon cmo5UAC). The chain is tRNA1(Val) (adenine(37)-N6)-methyltransferase from Trichodesmium erythraeum (strain IMS101).